Consider the following 330-residue polypeptide: Protein FAM170A (330 aa).

3 disordered regions span residues 1–54 (MKRR…VTST), 76–104 (HRDSPQPQSPLAQVQERGETPPRSQHVSL), and 169–218 (VGTP…AKTP). A compositionally biased stretch (polar residues) spans 174-185 (SDVSTRNLLSDS). A compositionally biased stretch (basic and acidic residues) spans 189–200 (GEEKEHEERTES). The residue at position 217 (threonine 217) is a Phosphothreonine. The C2H2-type; degenerate zinc finger occupies 228–252 (FRCMACCRVFTTMEALQEHVQFGIR). The disordered stretch occupies residues 270 to 330 (NMESESTQDE…VFHSPKDRNS (61 aa)). Residues 275-293 (STQDEQEEENGNEKEEEEK) are compositionally biased toward acidic residues. Residue serine 315 is modified to Phosphoserine.

Belongs to the FAM170 family. As to expression, expressed strongly in testis and brain and weakly in prostate, spleen, pancreas and uterus.

The protein resides in the nucleus. Its function is as follows. Acts as a nuclear transcription factor that positively regulates the expression of heat shock genes. Binds to heat shock promoter elements (HSE). This chain is Protein FAM170A (FAM170A), found in Homo sapiens (Human).